Reading from the N-terminus, the 122-residue chain is MAFDKDTIIASLKEASITDLSDLVKAIEDEFGVSAAAPVAAAGAAGGDAAGAKDSFDVEMTESGDAKVKAIKAVREITGLGLKDAKGLVDNVPSVIKEGVSEDEANDIKEKLEAVGAVVTLK.

This sequence belongs to the bacterial ribosomal protein bL12 family. In terms of assembly, homodimer. Part of the ribosomal stalk of the 50S ribosomal subunit. Forms a multimeric L10(L12)X complex, where L10 forms an elongated spine to which 2 to 4 L12 dimers bind in a sequential fashion. Binds GTP-bound translation factors.

Functionally, forms part of the ribosomal stalk which helps the ribosome interact with GTP-bound translation factors. Is thus essential for accurate translation. The sequence is that of Large ribosomal subunit protein bL12 from Levilactobacillus brevis (strain ATCC 367 / BCRC 12310 / CIP 105137 / JCM 1170 / LMG 11437 / NCIMB 947 / NCTC 947) (Lactobacillus brevis).